Here is a 4963-residue protein sequence, read N- to C-terminus: Kettin homolog (4963 aa).

Ig-like domains lie at 18–105 (PTFI…TCIL), 133–220 (PSAP…EAIS), and 303–392 (PIIR…ARIE). Disordered stretches follow at residues 396-420 (LSVP…QQQQ), 466-501 (RRQL…EEER), 557-578 (IRPH…RQEV), 598-622 (QLYQ…QQRF), and 652-696 (TNGG…GHEH). 3 stretches are compositionally biased toward basic and acidic residues: residues 399–417 (PDER…RDRQ), 466–475 (RRQLEHEKRL), and 484–501 (FERE…EEER). Positions 401 to 517 (ERRKENQLRE…KHLRQQQQTQ (117 aa)) form a coiled coil. Low complexity predominate over residues 557–576 (IRPHQQQQQHYQQQQQSPRQ). A compositionally biased stretch (low complexity) spans 658–685 (AANGSAKTANGSANGSANGSAVHAANGG). Ig-like domains follow at residues 706–796 (PQFL…FSLN), 806–893 (PEFT…GRVV), 937–1027 (PKFE…ANIA), 1065–1155 (PNFH…ATII), 1199–1281 (FHCE…AELT), 1462–1554 (PKFL…ITVT), 1594–1687 (PPTF…ATIR), 1728–1819 (PAFV…VDIN), 1992–2085 (PPVF…IFLE), 2126–2217 (PTFT…CTVK), 2258–2350 (PKFV…ANFT), 2391–2481 (PQFI…AQLT), 2522–2613 (PKFV…GQLS), 2654–2745 (PSFV…ANVG), 2787–2878 (PQWV…ATVT), 2919–3010 (PNFL…ASIR), 3051–3141 (PAIT…ATLK), 3182–3273 (PRFI…ATIE), 3314–3407 (PAIV…FEVS), and 3448–3539 (PVFI…TKLT). The cysteines at positions 827 and 877 are disulfide-linked. Cys1201 and Cys1265 are disulfide-bonded. Residues Cys1618 and Cys1671 are joined by a disulfide bond. Disulfide bonds link Cys2016–Cys2069 and Cys2148–Cys2201. The span at 3567 to 3583 (EAPRPAREDAPDADHGP) shows a compositional bias: basic and acidic residues. The disordered stretch occupies residues 3567-3590 (EAPRPAREDAPDADHGPPKFTSAL). 5 Ig-like domains span residues 3584–3677 (PKFT…LKVV), 3720–3811 (PSFS…GKIA), 3821–3913 (PQVV…TKIT), 3962–4052 (PEFR…AKLA), and 4098–4185 (PQFT…ATLD). Disulfide bonds link Cys3606–Cys3659 and Cys3742–Cys3795. The tract at residues 4193 to 4963 (RQTKLRPANF…TSQAKLTLSR (771 aa)) is required for F-actin binding. Positions 4319-4329 (DQQEVGWERPD) are enriched in basic and acidic residues. Residues 4319–4357 (DQQEVGWERPDWAGQDGTSKLPGADEGRFKKLPTPAPEL) form a disordered region. 4 consecutive Ig-like domains span residues 4546–4634 (PTIS…ANLT), 4645–4733 (PDFS…ARLN), 4752–4842 (PRFT…LVLT), and 4872–4960 (PHFI…AKLT).

Interacts (via Ig-like domains) with F-actin. Expressed in the pharyngeal, body wall, and anal depressor muscles. Expression in these muscles is higher in hermaphrodites than in males. Expressed in the vulva and the myoepithelial sheath of the proximal ovary. Expressed in the proximal gonad of males. Not expressed in the dense bodies of the obliquely striated body wall muscle.

Its subcellular location is the cytoplasm. The protein localises to the myofibril. It is found in the sarcomere. The protein resides in the cytoskeleton. In terms of biological role, positively regulates actin filament organization and provides mechanical stability to the myofibrils during body wall muscle contraction. Required for the organization of sarcomeric actin filaments and myosin protein myo-3 in striated body wall muscle cells. Not required for assembly of dense bodies, which are a type of integrin-based adhesion structure that link the plasma membrane to thin filaments of myofibrils, in body wall muscle. Not required for the atn-1 protein to localize to the dense bodies. The chain is Kettin homolog from Caenorhabditis elegans.